A 984-amino-acid polypeptide reads, in one-letter code: Calsyntenin-1 (984 aa).

Residues 1–18 (MRTAYFIFVGALLGVSYA) form the signal peptide. Residues 19-850 (KHHHAARAPI…VGQGAIAGGA (832 aa)) lie on the Extracellular side of the membrane. Cadherin domains are found at residues 66–142 (YLLT…APEI) and 143–257 (ENPW…APGV). Residues asparagine 206 and asparagine 305 are each glycosylated (N-linked (GlcNAc...) asparagine). Residues 851-871 (VAVVVVVCVGFLLVLLVIGVL) traverse the membrane as a helical segment. Topologically, residues 872–984 (KMRDTPMPRR…ISTNARSYRV (113 aa)) are cytoplasmic. Positions 878–959 (MPRRRRQKRQ…QTEVLPHLDA (82 aa)) are disordered. A compositionally biased stretch (basic and acidic residues) spans 886–896 (RQSDGGMHWDD). Positions 918-951 (EFSDEEEEEETDGESECSYRDEEDDVSEDEEDQT) are enriched in acidic residues.

It belongs to the calsyntenin family. In terms of assembly, interacts with isoform c of daf-2 (daf-2c); promoting daf-2c localization to synaptic regions. Interacts with klc-2. Interacts with unc-104. A proportion of the protein is proteolytically cleaved before the transmembrane domain in neurons, leading to release in the extracellular space. Widely expressed in the nervous system. Highly expressed in many head neurons, including most amphid sensory neurons. Also expressed in other tissues, such as intestine and gonadal sheath cells.

It is found in the golgi apparatus membrane. It localises to the perikaryon. The protein localises to the cell projection. The protein resides in the axon. Its subcellular location is the secreted. It is found in the synaptic cleft. Its function is as follows. Cell adhesion molecule involved in associative learning and memory. Acts as a regulator of GABAergic synaptic transmission at neuromuscular junctions by regulating GABA synaptic vesicle precursor transport: possibly functions as a cargo adapter for unc-104-mediated transport of synaptic vesicle precursors. Promotes localization of isoform c of daf-2 (daf-2c) to synaptic regions by acting as a signaling adapter between klc-2 and daf-2c. Acts as aregulator of glutamate signaling in the sensory neurons by inhibiting the activity of command interneurons, thereby negatively regulating motor circuit activity and locomotion. In Caenorhabditis elegans, this protein is Calsyntenin-1.